The primary structure comprises 324 residues: MAELEFEKPVVELRNKIRELKEYTKHSQMDFSEEIRILEDKLENLEEEIYGNMKVWDRVQIARHAERPTTLDYIEHLFTDFFECHGDRFFGDDAAIVGGIAKYNGMPVTVIGHQRGKDTKENIRRNFGMPHPEGYRKALRLMKQAEKFNRPIICFIDTKGAYPGKAAEERGQSEAIARNLFEMAGLTVPVICIVIGEGGSGGALGLGVGDYIYMLENSTYSVISPEGAATILWKDATKARDAAEALKITAADLKELGVIDEIIPESRGGAHRNILKQSENINVVLQKTFEQLSGISKDELIEKRYEKYMKIGQVSFSNASIWVK.

The CoA carboxyltransferase C-terminal domain occupies 37–291; sequence ILEDKLENLE…NVVLQKTFEQ (255 aa).

Belongs to the AccA family. Acetyl-CoA carboxylase is a heterohexamer composed of biotin carboxyl carrier protein (AccB), biotin carboxylase (AccC) and two subunits each of ACCase subunit alpha (AccA) and ACCase subunit beta (AccD).

It is found in the cytoplasm. The catalysed reaction is N(6)-carboxybiotinyl-L-lysyl-[protein] + acetyl-CoA = N(6)-biotinyl-L-lysyl-[protein] + malonyl-CoA. Its pathway is lipid metabolism; malonyl-CoA biosynthesis; malonyl-CoA from acetyl-CoA: step 1/1. Component of the acetyl coenzyme A carboxylase (ACC) complex. First, biotin carboxylase catalyzes the carboxylation of biotin on its carrier protein (BCCP) and then the CO(2) group is transferred by the carboxyltransferase to acetyl-CoA to form malonyl-CoA. This is Acetyl-coenzyme A carboxylase carboxyl transferase subunit alpha from Bacillus cytotoxicus (strain DSM 22905 / CIP 110041 / 391-98 / NVH 391-98).